Here is a 299-residue protein sequence, read N- to C-terminus: Zinc-alpha-2-glycoprotein (299 aa).

An N-terminal signal peptide occupies residues 1–17 (MVPVLLALLLLLGPAVS). Residues Asn24, Asn125, and Asn256 are each glycosylated (N-linked (GlcNAc...) asparagine). Intrachain disulfides connect Cys120/Cys183 and Cys222/Cys277. The Ig-like C1-type domain maps to 204–289 (PSVSVTGHAA…EHRSLTRPLT (86 aa)).

Belongs to the MHC class I family. Interacts with PIP.

It is found in the secreted. Its function is as follows. Stimulates lipid degradation in adipocytes and causes the extensive fat losses associated with some advanced cancers. This is Zinc-alpha-2-glycoprotein (AZGP1) from Bos taurus (Bovine).